The following is a 423-amino-acid chain: Serine hydroxymethyltransferase (423 aa).

Residues L125 and 129–131 (GHL) each bind (6S)-5,6,7,8-tetrahydrofolate. K234 carries the post-translational modification N6-(pyridoxal phosphate)lysine. E249 is a (6S)-5,6,7,8-tetrahydrofolate binding site.

Belongs to the SHMT family. Homodimer. The cofactor is pyridoxal 5'-phosphate.

The protein resides in the cytoplasm. It catalyses the reaction (6R)-5,10-methylene-5,6,7,8-tetrahydrofolate + glycine + H2O = (6S)-5,6,7,8-tetrahydrofolate + L-serine. It participates in one-carbon metabolism; tetrahydrofolate interconversion. Its pathway is amino-acid biosynthesis; glycine biosynthesis; glycine from L-serine: step 1/1. Its function is as follows. Catalyzes the reversible interconversion of serine and glycine with tetrahydrofolate (THF) serving as the one-carbon carrier. This reaction serves as the major source of one-carbon groups required for the biosynthesis of purines, thymidylate, methionine, and other important biomolecules. Also exhibits THF-independent aldolase activity toward beta-hydroxyamino acids, producing glycine and aldehydes, via a retro-aldol mechanism. The chain is Serine hydroxymethyltransferase from Thermobifida fusca (strain YX).